The chain runs to 587 residues: FAD-dependent monooxygenase ankC (587 aa).

A helical membrane pass occupies residues 7–27 (AVDVLIIGAGPAGLIAAMWMA). Residues Tyr-245 and Asp-311 each coordinate FAD.

This sequence belongs to the PheA/TfdB FAD monooxygenase family. In terms of assembly, homodimer. FAD serves as cofactor.

Its subcellular location is the membrane. The catalysed reaction is cyclo(L-arginyl-L-dehydrotyrosyl) + AH2 + O2 = cyclo(L-arginyl-(Z)-dehydro-3,4-dihydroxytyrosyl) + A + H2O. It participates in secondary metabolite biosynthesis. Its function is as follows. FAD-dependent monooxygenase; part of the ank cluster that mediates the biosynthesis of NK13650 C, a highly modified cyclo-arginine-tyrosine dipeptide. AnkC uses as substrate the dehydro-cyclodipeptide intermediate generated by the monooxygase ankB and acts as a hydroxylase that installs the m-OH through a canonical flavin-dependent aromatic hydroxylation mechanism. Within the pathway, the cyclodipeptide synthase ankA acts as the scaffold-generating enzyme and is responsible for formation of the cyclo-Arg-Tyr diketopiperazine (cRY) from L-Arg and L-Tyr. The ankA product cRY is desaturated by the cytochrome P450 monooxygenase ankB to yield a dehydro-cyclodipeptide intermediate. The FAD-dependent monooxygenase ankC then installs the m-OH, ankD catalyzes the attachment of L-homoserine, and ankE ligates citrate to the ankD product to yield NK13650 B. The O-methyltransferase ankF is responsible for methylation of the C-17 phenol group of NK13650 B to produce NK13650 D. Amidation of NK13650 D with L-Asp by ankG then leads to the production of NK13650 C, whereas amidation of NK13650 B produces NK13650 A. This chain is FAD-dependent monooxygenase ankC, found in Aspergillus thermomutatus (Neosartorya pseudofischeri).